Here is a 460-residue protein sequence, read N- to C-terminus: Cysteine--tRNA ligase (460 aa).

A Zn(2+)-binding site is contributed by cysteine 28. The short motif at 30–40 (MTVYDYCHLGH) is the 'HIGH' region element. Zn(2+) is bound by residues cysteine 209, histidine 234, and glutamate 238. The short motif at 266–270 (KMSKS) is the 'KMSKS' region element. Lysine 269 contacts ATP.

The protein belongs to the class-I aminoacyl-tRNA synthetase family. As to quaternary structure, monomer. The cofactor is Zn(2+).

Its subcellular location is the cytoplasm. It carries out the reaction tRNA(Cys) + L-cysteine + ATP = L-cysteinyl-tRNA(Cys) + AMP + diphosphate. The sequence is that of Cysteine--tRNA ligase from Pseudomonas fluorescens (strain ATCC BAA-477 / NRRL B-23932 / Pf-5).